We begin with the raw amino-acid sequence, 336 residues long: Anthranilate phosphoribosyltransferase (336 aa).

5-phospho-alpha-D-ribose 1-diphosphate is bound by residues Gly81, 84–85 (GD), Ser89, 91–94 (NIST), 109–117 (KHGNRGLSS), and Ala121. Gly81 contributes to the anthranilate binding site. Ser93 is a binding site for Mg(2+). Asn112 contacts anthranilate. Residue Arg167 participates in anthranilate binding. Positions 225 and 226 each coordinate Mg(2+).

This sequence belongs to the anthranilate phosphoribosyltransferase family. In terms of assembly, homodimer. Mg(2+) is required as a cofactor.

It catalyses the reaction N-(5-phospho-beta-D-ribosyl)anthranilate + diphosphate = 5-phospho-alpha-D-ribose 1-diphosphate + anthranilate. The protein operates within amino-acid biosynthesis; L-tryptophan biosynthesis; L-tryptophan from chorismate: step 2/5. Its function is as follows. Catalyzes the transfer of the phosphoribosyl group of 5-phosphorylribose-1-pyrophosphate (PRPP) to anthranilate to yield N-(5'-phosphoribosyl)-anthranilate (PRA). In Mesorhizobium japonicum (strain LMG 29417 / CECT 9101 / MAFF 303099) (Mesorhizobium loti (strain MAFF 303099)), this protein is Anthranilate phosphoribosyltransferase.